Reading from the N-terminus, the 461-residue chain is Cysteine--tRNA ligase (461 aa).

Cys28 contacts Zn(2+). Positions 30-40 match the 'HIGH' region motif; it reads ITVYDLCHIGH. Cys209, His234, and Glu238 together coordinate Zn(2+). The 'KMSKS' region motif lies at 266 to 270; it reads KMSKS. Lys269 lines the ATP pocket.

It belongs to the class-I aminoacyl-tRNA synthetase family. As to quaternary structure, monomer. It depends on Zn(2+) as a cofactor.

It is found in the cytoplasm. It carries out the reaction tRNA(Cys) + L-cysteine + ATP = L-cysteinyl-tRNA(Cys) + AMP + diphosphate. This Enterobacter sp. (strain 638) protein is Cysteine--tRNA ligase.